The sequence spans 407 residues: Multifunctional CCA protein (407 aa).

Gly8 and Arg11 together coordinate ATP. Gly8 and Arg11 together coordinate CTP. 2 residues coordinate Mg(2+): Asp21 and Asp23. Arg91, Arg137, and Arg140 together coordinate ATP. Residues Arg91, Arg137, and Arg140 each coordinate CTP. An HD domain is found at 228 to 329; the sequence is TGVHALMALA…VALFDRVDAW (102 aa).

This sequence belongs to the tRNA nucleotidyltransferase/poly(A) polymerase family. Bacterial CCA-adding enzyme type 1 subfamily. In terms of assembly, monomer. Can also form homodimers and oligomers. Requires Mg(2+) as cofactor. The cofactor is Ni(2+).

The catalysed reaction is a tRNA precursor + 2 CTP + ATP = a tRNA with a 3' CCA end + 3 diphosphate. It catalyses the reaction a tRNA with a 3' CCA end + 2 CTP + ATP = a tRNA with a 3' CCACCA end + 3 diphosphate. Catalyzes the addition and repair of the essential 3'-terminal CCA sequence in tRNAs without using a nucleic acid template. Adds these three nucleotides in the order of C, C, and A to the tRNA nucleotide-73, using CTP and ATP as substrates and producing inorganic pyrophosphate. tRNA 3'-terminal CCA addition is required both for tRNA processing and repair. Also involved in tRNA surveillance by mediating tandem CCA addition to generate a CCACCA at the 3' terminus of unstable tRNAs. While stable tRNAs receive only 3'-terminal CCA, unstable tRNAs are marked with CCACCA and rapidly degraded. This Erwinia tasmaniensis (strain DSM 17950 / CFBP 7177 / CIP 109463 / NCPPB 4357 / Et1/99) protein is Multifunctional CCA protein.